A 141-amino-acid polypeptide reads, in one-letter code: Hemoglobin subunit alpha-1 (141 aa).

Residues 1 to 141 (VLSAADKGNV…VSTVLTSKYR (141 aa)) form the Globin domain. His58 contacts O2. His87 lines the heme b pocket.

This sequence belongs to the globin family. In terms of assembly, heterotetramer of two alpha chains and two beta chains. Red blood cells.

Its function is as follows. Involved in oxygen transport from the lung to the various peripheral tissues. In Bos mutus grunniens (Wild yak), this protein is Hemoglobin subunit alpha-1.